Consider the following 102-residue polypeptide: Small ribosomal subunit protein bS6 (102 aa).

It belongs to the bacterial ribosomal protein bS6 family.

Its function is as follows. Binds together with bS18 to 16S ribosomal RNA. This Deinococcus geothermalis (strain DSM 11300 / CIP 105573 / AG-3a) protein is Small ribosomal subunit protein bS6.